Reading from the N-terminus, the 291-residue chain is 4-diphosphocytidyl-2-C-methyl-D-erythritol kinase (291 aa).

K11 is a catalytic residue. P95–S105 is a binding site for ATP. The active site involves D137.

Belongs to the GHMP kinase family. IspE subfamily.

The enzyme catalyses 4-CDP-2-C-methyl-D-erythritol + ATP = 4-CDP-2-C-methyl-D-erythritol 2-phosphate + ADP + H(+). The protein operates within isoprenoid biosynthesis; isopentenyl diphosphate biosynthesis via DXP pathway; isopentenyl diphosphate from 1-deoxy-D-xylulose 5-phosphate: step 3/6. Catalyzes the phosphorylation of the position 2 hydroxy group of 4-diphosphocytidyl-2C-methyl-D-erythritol. In Lachnoclostridium phytofermentans (strain ATCC 700394 / DSM 18823 / ISDg) (Clostridium phytofermentans), this protein is 4-diphosphocytidyl-2-C-methyl-D-erythritol kinase.